The primary structure comprises 173 residues: Photosystem I assembly protein Ycf3 (173 aa).

TPR repeat units lie at residues 35–68 (AYIY…EENK), 72–105 (GETL…NPKQ), and 120–153 (GRFA…YPGG).

The protein belongs to the Ycf3 family.

It is found in the cellular thylakoid membrane. Essential for the assembly of the photosystem I (PSI) complex. May act as a chaperone-like factor to guide the assembly of the PSI subunits. The polypeptide is Photosystem I assembly protein Ycf3 (Prochlorococcus marinus subsp. pastoris (strain CCMP1986 / NIES-2087 / MED4)).